A 146-amino-acid polypeptide reads, in one-letter code: UPF0735 ACT domain-containing protein Cphy_3604 (146 aa).

In terms of domain architecture, ACT spans 70–145 (TFMLQMDDIP…GIHYLKILGR (76 aa)).

Belongs to the UPF0735 family.

The chain is UPF0735 ACT domain-containing protein Cphy_3604 from Lachnoclostridium phytofermentans (strain ATCC 700394 / DSM 18823 / ISDg) (Clostridium phytofermentans).